The sequence spans 808 residues: Bifunctional uridylyltransferase/uridylyl-removing enzyme (808 aa).

The interval 1–315 (MEAESPCAAS…ALVRRPKRRP (315 aa)) is uridylyltransferase. The uridylyl-removing stretch occupies residues 316 to 609 (LDEGVVEYAG…EISPRDGERI (294 aa)). The region spanning 430–544 (VDRHVVETAV…LEVLHALSEA (115 aa)) is the HD domain. 2 ACT domains span residues 610-686 (DAVI…GMLQ) and 730-805 (ILEV…VDEP).

It belongs to the GlnD family. Mg(2+) is required as a cofactor.

It catalyses the reaction [protein-PII]-L-tyrosine + UTP = [protein-PII]-uridylyl-L-tyrosine + diphosphate. It carries out the reaction [protein-PII]-uridylyl-L-tyrosine + H2O = [protein-PII]-L-tyrosine + UMP + H(+). In terms of biological role, modifies, by uridylylation and deuridylylation, the PII regulatory protein (GlnB), in response to the nitrogen status of the cell that GlnD senses through the glutamine level. Under low glutamine levels, catalyzes the conversion of the PII protein and UTP to PII-UMP and PPi, while under higher glutamine levels, GlnD hydrolyzes PII-UMP to PII and UMP (deuridylylation). Thus, controls uridylylation state and activity of the PII protein, and plays an important role in the regulation of nitrogen assimilation and metabolism. The sequence is that of Bifunctional uridylyltransferase/uridylyl-removing enzyme from Mycobacterium tuberculosis (strain CDC 1551 / Oshkosh).